We begin with the raw amino-acid sequence, 305 residues long: Superkiller complex protein 8 (305 aa).

7 WD repeats span residues 14 to 57 (AHED…LELQ), 62 to 101 (GHQLGVVSVNISQNGAIAASSSLDAHIRLWDLETGKQIKS), 104 to 143 (AGPVDAWTVAFSPDSKYIATGSHLGKVNIFGVESGKKEHS), 146 to 187 (TRGK…HTLE), 188 to 227 (GHAMPIRSLTFSPDSQLLVTASDDGYIKIYDVQHANLAGT), 230 to 269 (GHGSWVLSVAFSPDDTHFVSSSSDKSIKVWDTSSRSCVNT), and 272 to 305 (DHQDQVWSVKYNPTGSKIVSAGDDRAIHIYDCPM).

It belongs to the SKI8 family. Component of the PAF1 complex. Component of the SKI complex.

Its subcellular location is the nucleus. The protein localises to the cytoplasm. Its function is as follows. Component of the PAF1 complex (PAF1C) which has multiple functions during transcription by RNA polymerase II and is implicated in regulation of development and maintenance of embryonic stem cell pluripotency. PAF1C associates with RNA polymerase II through interaction with POLR2A CTD non-phosphorylated and 'Ser-2'- and 'Ser-5'-phosphorylated forms and is involved in transcriptional elongation, acting both independently and synergistically with TCEA1 and in cooperation with the DSIF complex and HTATSF1. Also acts as a component of the SKI complex, a multiprotein complex that assists the RNA-degrading exosome during the mRNA decay and quality-control pathways. The SKI complex catalyzes mRNA extraction from 80S ribosomal complexes in the 3'-5' direction and channels mRNA to the cytosolic exosome for degradation. The protein is Superkiller complex protein 8 (skic8) of Danio rerio (Zebrafish).